Here is a 307-residue protein sequence, read N- to C-terminus: UPF0276 protein PM0211 (307 aa).

Belongs to the UPF0276 family.

The sequence is that of UPF0276 protein PM0211 from Pasteurella multocida (strain Pm70).